The following is a 312-amino-acid chain: Cell division control protein 2 homolog D (312 aa).

Positions 14–304 (FVKLEKVGEG…AKKAMEHPYF (291 aa)) constitute a Protein kinase domain. ATP is bound by residues 20–28 (VGEGTYGKV) and Lys43. Thr24 carries the phosphothreonine modification. Tyr25 carries the phosphotyrosine modification. The active-site Proton acceptor is Asp145. Position 179 is a phosphothreonine; by CAK (Thr179).

Belongs to the protein kinase superfamily. CMGC Ser/Thr protein kinase family. CDC2/CDKX subfamily.

It carries out the reaction L-seryl-[protein] + ATP = O-phospho-L-seryl-[protein] + ADP + H(+). The catalysed reaction is L-threonyl-[protein] + ATP = O-phospho-L-threonyl-[protein] + ADP + H(+). It catalyses the reaction [DNA-directed RNA polymerase] + ATP = phospho-[DNA-directed RNA polymerase] + ADP + H(+). Plays a key role in the control of the eukaryotic cell cycle. This is Cell division control protein 2 homolog D (CDC2D) from Antirrhinum majus (Garden snapdragon).